We begin with the raw amino-acid sequence, 283 residues long: tRNA-cytidine(32) 2-sulfurtransferase (283 aa).

Residues serine 49–serine 54 carry the PP-loop motif motif. [4Fe-4S] cluster contacts are provided by cysteine 124, cysteine 127, and cysteine 215.

It belongs to the TtcA family. In terms of assembly, homodimer. Requires Mg(2+) as cofactor. [4Fe-4S] cluster is required as a cofactor.

Its subcellular location is the cytoplasm. It carries out the reaction cytidine(32) in tRNA + S-sulfanyl-L-cysteinyl-[cysteine desulfurase] + AH2 + ATP = 2-thiocytidine(32) in tRNA + L-cysteinyl-[cysteine desulfurase] + A + AMP + diphosphate + H(+). It functions in the pathway tRNA modification. In terms of biological role, catalyzes the ATP-dependent 2-thiolation of cytidine in position 32 of tRNA, to form 2-thiocytidine (s(2)C32). The sulfur atoms are provided by the cysteine/cysteine desulfurase (IscS) system. The chain is tRNA-cytidine(32) 2-sulfurtransferase from Acaryochloris marina (strain MBIC 11017).